Consider the following 659-residue polypeptide: MGEFKIQSKFKPTGDQPKAIDTLVQSIENGNRGQTLLGVTGSGKTFTMANIIERTQKPTLILAHNKTLAAQLCAEFKEFFPDNIVEYFVSYYDYYQPEAYVPQTDTFIEKDASINDEIDKLRHSATSALLERRDVIIVASVSCIYGLGNPEEYKKLTISLRPGMIKDRDEVIKKLIEIQYERNDIDFARGTFRVRGDNLDIIPSSSSSKGIRIEFFGDEIDRIREFDVLTGNIIGERQHVSITPASHFAASEETLEKSIRVIEDELEDRLKVLTAEDKILEAQRLKQRTNYDIEMIREMGYCQGIENYSRILDGRMPGTPPQTLLDYFPEDFLMFIDESHVTLPQVRAMYAGDRSRKTSLVEFGFRLPCAFDNRPLKFSEFESKINQVVFVSATPGEYELDHSEIVAEQIIRPTGLLDPVIEIRPIQGQIDDLYGEIQRTVQRGFRVLITTLTKRMAEDLTKYLKDLNVKATYMHSDIDTLERMKIIRELRLGEVDVLIGINLLREGLDIPEVALVAILDADKEGFLRSETSLIQTIGRAARNSESKVIMYADNITKSMDKSIKETERRRVIQMEYNEEHNITPTTVIKGVRDIIEATKVSEEKENYESEVKKAAKKDIPVEKLIEQYEEEMKEAAKNLQFERAAELRDIIKDLKENSK.

Residues 25–412 (QSIENGNRGQ…SEIVAEQIIR (388 aa)) enclose the Helicase ATP-binding domain. 38–45 (GVTGSGKT) lines the ATP pocket. Residues 91 to 114 (YYDYYQPEAYVPQTDTFIEKDASI) carry the Beta-hairpin motif. The region spanning 429–582 (QIDDLYGEIQ…QMEYNEEHNI (154 aa)) is the Helicase C-terminal domain. One can recognise a UVR domain in the interval 622-657 (EKLIEQYEEEMKEAAKNLQFERAAELRDIIKDLKEN).

The protein belongs to the UvrB family. Forms a heterotetramer with UvrA during the search for lesions. Interacts with UvrC in an incision complex.

Its subcellular location is the cytoplasm. Functionally, the UvrABC repair system catalyzes the recognition and processing of DNA lesions. A damage recognition complex composed of 2 UvrA and 2 UvrB subunits scans DNA for abnormalities. Upon binding of the UvrA(2)B(2) complex to a putative damaged site, the DNA wraps around one UvrB monomer. DNA wrap is dependent on ATP binding by UvrB and probably causes local melting of the DNA helix, facilitating insertion of UvrB beta-hairpin between the DNA strands. Then UvrB probes one DNA strand for the presence of a lesion. If a lesion is found the UvrA subunits dissociate and the UvrB-DNA preincision complex is formed. This complex is subsequently bound by UvrC and the second UvrB is released. If no lesion is found, the DNA wraps around the other UvrB subunit that will check the other stand for damage. In Clostridium perfringens (strain 13 / Type A), this protein is UvrABC system protein B.